The following is a 210-amino-acid chain: MTDLSQQFDRLIAQTDLNVSELQKEQLLGYVALLHKWNKAYNLTSVRNPSEMVIKHILDSIVVSPKLSGERFIDVGTGPGLPGIPLAIMNPEKSFTLLDSLGKRIRFIKQVIHELKITNVTPIQSRVEEFQPEEKFDAVLSRAFASMTDMVNWCHHLPKEEDGVFLALKGIYSEEEANDLPEWCSVKNVATLIVPELEGERHLVTLAGKK.

S-adenosyl-L-methionine-binding positions include glycine 76, leucine 81, 127 to 128, and arginine 142; that span reads VE.

It belongs to the methyltransferase superfamily. RNA methyltransferase RsmG family.

It is found in the cytoplasm. The enzyme catalyses guanosine(527) in 16S rRNA + S-adenosyl-L-methionine = N(7)-methylguanosine(527) in 16S rRNA + S-adenosyl-L-homocysteine. In terms of biological role, specifically methylates the N7 position of guanine in position 527 of 16S rRNA. This Aliivibrio fischeri (strain ATCC 700601 / ES114) (Vibrio fischeri) protein is Ribosomal RNA small subunit methyltransferase G.